The sequence spans 334 residues: H-2 class I histocompatibility antigen, Q7 alpha chain (334 aa).

The first 21 residues, 1–21, serve as a signal peptide directing secretion; that stretch reads MALTMLLLLVAAALTLIETRA. The tract at residues 22-111 is alpha-1; sequence GQHSLQYFHT…AQSYYNQSKG (90 aa). At 22–310 the chain is on the extracellular side; that stretch reads GQHSLQYFHT…PPYTVSNMAT (289 aa). Asn107 carries an N-linked (GlcNAc...) asparagine glycan. An alpha-2 region spans residues 112–203; it reads GSHTLQWMYG…QLGKETLLRT (92 aa). 2 disulfide bridges follow: Cys122–Cys185 and Cys224–Cys280. The tract at residues 204–295 is alpha-3; it reads DPPKAHVTHH…GLPEPLTLRW (92 aa). The Ig-like C1-type domain occupies 206 to 294; it reads PKAHVTHHPR…EGLPEPLTLR (89 aa). Residue Asn277 is glycosylated (N-linked (GlcNAc...) asparagine). Residues 296 to 310 are connecting peptide; it reads GRWEPPPYTVSNMAT. Residues 311-332 traverse the membrane as a helical segment; that stretch reads IAVVVDLGAVAIIGAVVAFVMN.

It belongs to the MHC class I family. In terms of assembly, heterodimer of an alpha chain and a beta chain (beta-2-microglobulin).

The protein resides in the membrane. Its function is as follows. Involved in the presentation of foreign antigens to the immune system. This Mus musculus (Mouse) protein is H-2 class I histocompatibility antigen, Q7 alpha chain (H2-Q7).